The primary structure comprises 79 residues: Pulmonary surfactant-associated protein B (79 aa).

Residues 4 to 79 enclose the Saposin B-type domain; it reads PLPFCWLCRT…VCGLVLRCSS (76 aa). 3 cysteine pairs are disulfide-bonded: cysteine 8–cysteine 77, cysteine 11–cysteine 71, and cysteine 35–cysteine 46.

Homodimer; disulfide-linked.

The protein localises to the secreted. It is found in the extracellular space. It localises to the surface film. Functionally, pulmonary surfactant-associated proteins promote alveolar stability by lowering the surface tension at the air-liquid interface in the peripheral air spaces. SP-B increases the collapse pressure of palmitic acid to nearly 70 millinewtons per meter. The sequence is that of Pulmonary surfactant-associated protein B (SFTPB) from Sus scrofa (Pig).